The primary structure comprises 270 residues: Cytochrome c oxidase subunit 3 (270 aa).

7 helical membrane passes run 21–41 (PWPF…VLYF), 46–66 (GSLV…FVWW), 90–110 (GIML…WAFF), 131–151 (FFSP…SGCA), 167–187 (AIFS…FQIY), 205–225 (FFMI…FLFV), and 248–268 (WYWH…YWWG).

Belongs to the cytochrome c oxidase subunit 3 family. As to quaternary structure, component of the cytochrome c oxidase (complex IV, CIV), a multisubunit enzyme composed of a catalytic core of 3 subunits and several supernumerary subunits. The complex exists as a monomer or a dimer and forms supercomplexes (SCs) in the inner mitochondrial membrane with ubiquinol-cytochrome c oxidoreductase (cytochrome b-c1 complex, complex III, CIII).

The protein localises to the mitochondrion inner membrane. It carries out the reaction 4 Fe(II)-[cytochrome c] + O2 + 8 H(+)(in) = 4 Fe(III)-[cytochrome c] + 2 H2O + 4 H(+)(out). Its function is as follows. Component of the cytochrome c oxidase, the last enzyme in the mitochondrial electron transport chain which drives oxidative phosphorylation. The respiratory chain contains 3 multisubunit complexes succinate dehydrogenase (complex II, CII), ubiquinol-cytochrome c oxidoreductase (cytochrome b-c1 complex, complex III, CIII) and cytochrome c oxidase (complex IV, CIV), that cooperate to transfer electrons derived from NADH and succinate to molecular oxygen, creating an electrochemical gradient over the inner membrane that drives transmembrane transport and the ATP synthase. Cytochrome c oxidase is the component of the respiratory chain that catalyzes the reduction of oxygen to water. Electrons originating from reduced cytochrome c in the intermembrane space (IMS) are transferred via the dinuclear copper A center (CU(A)) of subunit 2 and heme A of subunit 1 to the active site in subunit 1, a binuclear center (BNC) formed by heme A3 and copper B (CU(B)). The BNC reduces molecular oxygen to 2 water molecules using 4 electrons from cytochrome c in the IMS and 4 protons from the mitochondrial matrix. This Cyanidium caldarium (Red alga) protein is Cytochrome c oxidase subunit 3 (COX3).